Reading from the N-terminus, the 545-residue chain is MAAKEVKFSDDARTRMLRGVNILAHAVKVTLGPKGRNVVLEKSFGAPTVTKDGVSVAKEIELSDKFENMGAQMVKEVASQTSDVAGDGTTTATVLAQSILTEGLKAVAAGMNPMDLKRGIDKAVAAAVDEIHAMSVPCTDSNAIAQVGTISANADESIGKIIAEAMDKVGKEGVITVEDGSGLENQLDIVEGMQFDRGYLSPYFINNQQSMSAELENPFILINEKKISNIRELLPVLEGVAKAGRPLVIVAEDVEGEALATLVVNNMRGILKVAAVKAPGFGDRRKAMLEDIAVLTGGTVISEDIGLSLEKATLADLGTAKKVQITKENTTIIDGAGSSEAIQGRVAQIRKQIEDTTSDYDREKLQERLAKLAGGVAVIKVGAATEVEMKEKKARVEDALHATRAAVEEGIVPGGGVALIRALAKLRDLKGANHDQDVGISIARRAMEEPLRQIVANAGDEPSVVLNKVAEGAGNFGYNAATGEYGDMVAMGILDPAKVTRSALQNAASVASLMITTEAMVAEEPKEEAPMPGGMGGMGGMGDMM.

ATP is bound by residues 30 to 33 (TLGP), Lys-51, 87 to 91 (DGTTT), Gly-415, 479 to 481 (NAA), and Asp-495.

Belongs to the chaperonin (HSP60) family. As to quaternary structure, forms a cylinder of 14 subunits composed of two heptameric rings stacked back-to-back. Interacts with the co-chaperonin GroES.

It localises to the cytoplasm. It catalyses the reaction ATP + H2O + a folded polypeptide = ADP + phosphate + an unfolded polypeptide.. Functionally, together with its co-chaperonin GroES, plays an essential role in assisting protein folding. The GroEL-GroES system forms a nano-cage that allows encapsulation of the non-native substrate proteins and provides a physical environment optimized to promote and accelerate protein folding. This is Chaperonin GroEL 1 from Methylococcus capsulatus (strain ATCC 33009 / NCIMB 11132 / Bath).